The chain runs to 531 residues: Bifunctional protein TrpGD (531 aa).

Residues 3-196 (DILLLDNIDS…LAWAQQKLEP (194 aa)) form the Glutamine amidotransferase type-1 domain. 57 to 59 (GPG) contributes to the L-glutamine binding site. C84 functions as the Nucleophile; for GATase activity in the catalytic mechanism. L-glutamine is bound by residues Q88 and 134–135 (SL). Residues H170 and E172 each act as for GATase activity in the active site. Residues 202-531 (PILEKLYQAQ…DRVTALAARG (330 aa)) form an anthranilate phosphoribosyltransferase region.

In the C-terminal section; belongs to the anthranilate phosphoribosyltransferase family. Monomer. Heterotetramer consisting of two non-identical subunits: a beta subunit (TrpG) and a large alpha subunit (TrpE).

The enzyme catalyses chorismate + L-glutamine = anthranilate + pyruvate + L-glutamate + H(+). It carries out the reaction N-(5-phospho-beta-D-ribosyl)anthranilate + diphosphate = 5-phospho-alpha-D-ribose 1-diphosphate + anthranilate. The protein operates within amino-acid biosynthesis; L-tryptophan biosynthesis; L-tryptophan from chorismate: step 1/5. Its pathway is amino-acid biosynthesis; L-tryptophan biosynthesis; L-tryptophan from chorismate: step 2/5. Its activity is regulated as follows. Cooperatively feedback inhibited by tryptophan. Functionally, part of a heterotetrameric complex that catalyzes the two-step biosynthesis of anthranilate, an intermediate in the biosynthesis of L-tryptophan. In the first step, the glutamine-binding beta subunit (TrpG) of anthranilate synthase (AS) provides the glutamine amidotransferase activity which generates ammonia as a substrate that, along with chorismate, is used in the second step, catalyzed by the large alpha subunit of AS (TrpE) to produce anthranilate. In the absence of TrpG, TrpE can synthesize anthranilate directly from chorismate and high concentrations of ammonia. In addition to synthesizing anthranilate, it also catalyzes the second step of the pathway, the transfer of the phosphoribosyl group of 5-phosphorylribose-1-pyrophosphate (PRPP) to anthranilate. This Salmonella typhimurium (strain LT2 / SGSC1412 / ATCC 700720) protein is Bifunctional protein TrpGD (trpGD).